Consider the following 1478-residue polypeptide: Serine/threonine-protein kinase BCK1/SLK1/SSP31 (1478 aa).

4 disordered regions span residues 1–70 (MPFL…TSSQ), 99–126 (TSFT…GGNS), 217–359 (NVTN…RRHH), and 373–427 (FGSG…KGNL). A compositionally biased stretch (low complexity) spans 29 to 49 (PTSSVASTKSSSKSPRATSRK). Polar residues-rich tracts occupy residues 58–70 (QFPN…TSSQ) and 99–110 (TSFTNSSYKNDN). The span at 111–126 (GPSSLSDSRKSSGGNS) shows a compositional bias: low complexity. The segment covering 223-233 (IRQKSASKLKS) has biased composition (basic residues). Polar residues-rich tracts occupy residues 253–273 (DISN…SGPS) and 281–297 (LHST…SSLY). Low complexity-rich tracts occupy residues 298–320 (RRSF…SPSN) and 342–353 (SASPPASPSYPS). Composition is skewed to polar residues over residues 386–396 (NPQGHSLSSEN) and 407–420 (TNVS…SLPT). The residue at position 407 (Thr-407) is a Phosphothreonine. Ser-411 and Ser-491 each carry phosphoserine. The interval 644-671 (KPKPAPLTSENNVPLKSVKSKSSMRSGT) is disordered. Residues 659–671 (KSVKSKSSMRSGT) show a composition bias toward low complexity. Ser-747 is subject to Phosphoserine. Disordered regions lie at residues 752 to 877 (LNLP…ASTH), 895 to 939 (KTDQ…RGNS), 960 to 1021 (ADAP…TQDK), and 1053 to 1116 (TEGI…TPKR). A compositionally biased stretch (polar residues) spans 765-777 (TPITENESKSSFQ). A compositionally biased stretch (basic and acidic residues) spans 779 to 809 (LRKDEGTEIDFNHRRESPYTKPELAPKREAP). The segment covering 813–827 (ANTSPQRTLSTSKQN) has biased composition (polar residues). The residue at position 816 (Ser-816) is a Phosphoserine. 2 stretches are compositionally biased toward low complexity: residues 851 to 870 (QLLS…LTSS) and 914 to 925 (NRSNSTVSTSNS). Acidic residues predominate over residues 967-977 (DSDDSDDDSSS). Basic and acidic residues predominate over residues 994 to 1011 (NENKKDEKSDNSSTHSDE). A phosphoserine mark is found at Ser-1058 and Ser-1061. The span at 1058–1083 (SPTSPKSLDSLLSPKNVASSRTEPST) shows a compositional bias: low complexity. A Phosphoserine; by PKC modification is found at Ser-1134. Residues 1175–1440 (WMKGEMIGKG…ANELLSHPFS (266 aa)) enclose the Protein kinase domain. ATP contacts are provided by residues 1181-1189 (IGKGSFGAV) and Lys-1204. Asp-1303 acts as the Proton acceptor in catalysis.

Belongs to the protein kinase superfamily. STE Ser/Thr protein kinase family. MAP kinase kinase kinase subfamily.

The protein resides in the cytoplasm. It carries out the reaction L-seryl-[protein] + ATP = O-phospho-L-seryl-[protein] + ADP + H(+). The enzyme catalyses L-threonyl-[protein] + ATP = O-phospho-L-threonyl-[protein] + ADP + H(+). Its function is as follows. Serine/threonine protein kinase involved in a signal transduction pathway that plays a role in yeast cell morphogenesis and cell growth. This pathway seems to start by SMP3; then involve the kinase PKC1 that may act on this kinase. BCK1 probably phosphorylates MKK1 and MKK2 which themselves phosphorylate the MPK1 kinase. The sequence is that of Serine/threonine-protein kinase BCK1/SLK1/SSP31 (BCK1) from Saccharomyces cerevisiae (strain ATCC 204508 / S288c) (Baker's yeast).